The primary structure comprises 409 residues: Aspartate aminotransferase, cytoplasmic (409 aa).

An N-acetylserine modification is found at Ser-2. Positions 38, 138, and 191 each coordinate L-aspartate. Lys-255 carries the post-translational modification N6-(pyridoxal phosphate)lysine. Position 383 (Arg-383) interacts with L-aspartate. Ser-385 carries the post-translational modification Phosphoserine.

Belongs to the class-I pyridoxal-phosphate-dependent aminotransferase family. Homodimer. Pyridoxal 5'-phosphate serves as cofactor.

The protein localises to the cytoplasm. It catalyses the reaction L-aspartate + 2-oxoglutarate = oxaloacetate + L-glutamate. In terms of biological role, plays a key role in amino acid metabolism. The chain is Aspartate aminotransferase, cytoplasmic from Schizosaccharomyces pombe (strain 972 / ATCC 24843) (Fission yeast).